The chain runs to 415 residues: Casein kinase I isoform delta (415 aa).

Positions 9 to 277 (YRLGRKIGSG…YLRQLFRNLF (269 aa)) constitute a Protein kinase domain. Residues 15 to 23 (IGSGSFGDI) and lysine 38 each bind ATP. Aspartate 128 acts as the Proton acceptor in catalysis. The segment at 278-364 (HRQGFSYDYV…TSPRPVSGME (87 aa)) is centrosomal localization signal (CLS). The segment covering 301 to 315 (ADDAERERRDREERL) has biased composition (basic and acidic residues). Residues 301 to 415 (ADDAERERRD…SSGLQSVVHR (115 aa)) form a disordered region. The interval 317–342 (HSRNPATRGLPSTASGRLRGTQEVAP) is autoinhibitory. Residues serine 328 and serine 331 each carry the phosphoserine modification. A compositionally biased stretch (polar residues) spans 347 to 358 (TPTSHTANTSPR). Residue serine 370 is modified to Phosphoserine. Arginine 375 bears the Omega-N-methylarginine mark. The segment covering 380-400 (NISSSDLTGRQDTSRMSTSQI) has biased composition (polar residues). Serine 382, serine 383, serine 384, serine 407, and serine 411 each carry phosphoserine.

It belongs to the protein kinase superfamily. CK1 Ser/Thr protein kinase family. Casein kinase I subfamily. As to quaternary structure, monomer. Component of the circadian core oscillator, which includes the CRY proteins, CLOCK, or NPAS2, ARTNL/BMAL1 or ARTNL2/BMAL2, CSNK1D and/or CSNK1E, TIMELESS and the PER proteins. Interacts with DNMT1 and MAP1A. Interacts directly with PER1 and PER2 which may lead to their degradation. Interacts with MAPT/TAU, SNAPIN, DBNDD2, AIB1/NCOA3 and ESR1. Interacts with AKAP9/AKAP450; this interaction promotes centrosomal subcellular location. Binds to tubulins in mitotic cells upon DNA damage. Interacts with GJA1. Interacts with DDX3X; this interaction enhances CSNK1D kinase activity in vitro, but it is unclear whether this interaction is physiologically relevant. Interacts with FAM83A, FAM83B, FAM83E and FAM83H (via DUF1669). In terms of processing, autophosphorylated on serine and threonine residues; this autophosphorylation represses activity. Reactivated by phosphatase-mediated dephosphorylation. May be dephosphorylated by PP1.

It localises to the cytoplasm. The protein resides in the nucleus. It is found in the cytoskeleton. Its subcellular location is the microtubule organizing center. The protein localises to the centrosome. It localises to the perinuclear region. The protein resides in the cell membrane. It is found in the spindle. Its subcellular location is the golgi apparatus. It carries out the reaction L-seryl-[protein] + ATP = O-phospho-L-seryl-[protein] + ADP + H(+). The catalysed reaction is L-threonyl-[protein] + ATP = O-phospho-L-threonyl-[protein] + ADP + H(+). It catalyses the reaction L-seryl-[tau protein] + ATP = O-phospho-L-seryl-[tau protein] + ADP + H(+). The enzyme catalyses L-threonyl-[tau protein] + ATP = O-phospho-L-threonyl-[tau protein] + ADP + H(+). Drug-mediated inhibition leads to a delay of the oscillations with the magnitude of this effect dependent upon the timing of drug administration. Inhibited by phosphorylation. Exhibits substrate-dependent heparin activation. Its function is as follows. Essential serine/threonine-protein kinase that regulates diverse cellular growth and survival processes including Wnt signaling, DNA repair and circadian rhythms. It can phosphorylate a large number of proteins. Casein kinases are operationally defined by their preferential utilization of acidic proteins such as caseins as substrates. Phosphorylates connexin-43/GJA1, MAP1A, SNAPIN, MAPT/TAU, TOP2A, DCK, HIF1A, EIF6, p53/TP53, DVL2, DVL3, ESR1, AIB1/NCOA3, DNMT1, PKD2, YAP1, PER1 and PER2. Central component of the circadian clock. In balance with PP1, determines the circadian period length through the regulation of the speed and rhythmicity of PER1 and PER2 phosphorylation. Controls PER1 and PER2 nuclear transport and degradation. YAP1 phosphorylation promotes its SCF(beta-TRCP) E3 ubiquitin ligase-mediated ubiquitination and subsequent degradation. DNMT1 phosphorylation reduces its DNA-binding activity. Phosphorylation of ESR1 and AIB1/NCOA3 stimulates their activity and coactivation. Phosphorylation of DVL2 and DVL3 regulates WNT3A signaling pathway that controls neurite outgrowth. Phosphorylates NEDD9/HEF1. EIF6 phosphorylation promotes its nuclear export. Triggers down-regulation of dopamine receptors in the forebrain. Activates DCK in vitro by phosphorylation. TOP2A phosphorylation favors DNA cleavable complex formation. May regulate the formation of the mitotic spindle apparatus in extravillous trophoblast. Modulates connexin-43/GJA1 gap junction assembly by phosphorylation. Probably involved in lymphocyte physiology. Regulates fast synaptic transmission mediated by glutamate. This Bos taurus (Bovine) protein is Casein kinase I isoform delta (CSNK1D).